The chain runs to 332 residues: Nuclear hormone receptor family member nhr-9 (332 aa).

Positions 11–85 (ERRCAICSKL…MGMRIVTNQY (75 aa)) form a DNA-binding region, nuclear receptor. 2 NR C4-type zinc fingers span residues 14–34 (CAIC…CNAC) and 50–73 (CINN…YNKC). Positions 101-332 (DRSNKLMNFQ…KRLCAELLGA (232 aa)) constitute an NR LBD domain.

The protein belongs to the nuclear hormone receptor family.

It localises to the nucleus. Functionally, orphan nuclear receptor. The chain is Nuclear hormone receptor family member nhr-9 (nhr-9) from Caenorhabditis elegans.